Reading from the N-terminus, the 366-residue chain is Prostaglandin F2-alpha receptor (366 aa).

At 1–31 (MSMNSSKQPVSPAAGLIANTTCQTENRLSVF) the chain is on the extracellular side. Residues Asn4 and Asn19 are each glycosylated (N-linked (GlcNAc...) asparagine). Residues 32 to 55 (FSIIFMTVGILSNSLAIAILMKAY) traverse the membrane as a helical segment. Topologically, residues 56–69 (QRFRQKSKASFLLL) are cytoplasmic. A helical membrane pass occupies residues 70 to 90 (ASGLVITDFFGHLINGGIAVF). Over 91–109 (VYASDKDWIRFDQSNILCS) the chain is Extracellular. Cys108 and Cys186 form a disulfide bridge. The chain crosses the membrane as a helical span at residues 110 to 131 (IFGISMVFSGLCPLFLGSAMAI). The Cytoplasmic portion of the chain corresponds to 132–152 (ERCIGVTNPIFHSTKITSKHV). The chain crosses the membrane as a helical span at residues 153 to 175 (KMILSGVCMFAVFVAVLPILGHR). Residues 176-198 (DYQIQASRTWCFYNTEHIEDWED) are Extracellular-facing. The helical transmembrane segment at 199-224 (RFYLLFFSFLGLLALGVSFSCNAVTG) threads the bilayer. Residues 225 to 250 (VTLLRVKFRSQQHRQGRSHHLEMIIQ) lie on the Cytoplasmic side of the membrane. The helical transmembrane segment at 251-267 (LLAIMCVSCVCWSPFLV) threads the bilayer. The Extracellular portion of the chain corresponds to 268–285 (TMANIAINGNNSPVTCET). Residues 286-307 (TLFALRMATWNQILDPWVYILL) form a helical membrane-spanning segment. Over 308-366 (RKAVLRNLYKLASRCCGVNIISLHIWELSSIKNSLKVAAISESPAAEKESQQASSEAGL) the chain is Cytoplasmic.

Belongs to the G-protein coupled receptor 1 family.

The protein resides in the cell membrane. In terms of biological role, receptor for prostaglandin F2-alpha (PGF2-alpha). The activity of this receptor is mediated by G proteins which activate a phosphatidylinositol-calcium second messenger system. Initiates luteolysis in the corpus luteum. This Mus musculus (Mouse) protein is Prostaglandin F2-alpha receptor (Ptgfr).